Here is a 291-residue protein sequence, read N- to C-terminus: Inactive dihydropteroate synthase 2 (291 aa).

The Pterin-binding domain occupies 15 to 272 (QLIMAIVNRT…EVVATRRVLE (258 aa)).

This sequence belongs to the DHPS family. In terms of assembly, homodimer.

In terms of biological role, has very low affinity for the DHPS substrate 6-hydroxymethyl-7,8-dihydropterin-pyrophosphate, but can bind the inhibitor dapsone. Seems to lack dihydropteroate synthase activity, and does probably not function in folate metabolism. The polypeptide is Inactive dihydropteroate synthase 2 (folP2) (Mycobacterium leprae (strain TN)).